Here is a 96-residue protein sequence, read N- to C-terminus: Plasminogen-like protein B (96 aa).

An N-terminal signal peptide occupies residues 1 to 19 (MEHKEVVLLLLLFLKSGQG). The region spanning 20 to 96 (EPLDDYVNTQ…RMRDAVLFEK (77 aa)) is the PAN domain. Cystine bridges form between C49–C73 and C53–C61.

The protein localises to the secreted. Functionally, may bind noncovalently to lysine binding sites present in the kringle structures of plasminogen. This may interfere with the binding of fibrin or alpha-2-antiplasmin to plasminogen and may result in the localization of activity at sites necessary for extracellular matrix destruction. This chain is Plasminogen-like protein B (PLGLB1), found in Homo sapiens (Human).